A 264-amino-acid polypeptide reads, in one-letter code: Apolipoprotein A-I (264 aa).

The first 18 residues, 1-18 (MKAVVLTVAVLFLTGSQA), serve as a signal peptide directing secretion. 2 consecutive repeat copies span residues 67 to 88 (LKLLDNWDSLSSTVSKVREQIG) and 89 to 110 (PVSQDFWDKLEKDTVSLRQEMN). Positions 67-264 (LKLLDNWDSL…DEATKKLNTQ (198 aa)) are 10 X approximate tandem repeats. The residue at position 109 (Met-109) is a Methionine sulfoxide. The 3; half-length repeat unit spans residues 111-121 (KDLEEVKRKVQ). A run of 3 repeats spans residues 122-143 (PYLDEFQKRWQEDVERYRQQVE), 144-165 (PLSKELREGARQKLLELHEKLS), and 166-187 (PLGQEMRDRARTHVDALRTHLA). One copy of the 7; truncated repeat lies at 188–207 (PYSDELRQRLAARLEALKEG). Residues 208-229 (SSFAEYQAKATEHLSALGEKAK) form repeat 8. The 9; half-length repeat unit spans residues 230-240 (PALEDLRQGLL). Copy 10 of the repeat occupies 241 to 264 (PVLESLKLSFWSAVDEATKKLNTQ).

This sequence belongs to the apolipoprotein A1/A4/E family. Homodimer. Interacts with APOA1BP and CLU. Component of a sperm activating protein complex (SPAP), consisting of APOA1, an immunoglobulin heavy chain, an immunoglobulin light chain and albumin. Interacts with NDRG1. Interacts with SCGB3A2. Interacts with NAXE and YJEFN3. Post-translationally, glycosylated. In terms of processing, palmitoylated. Phosphorylation sites are present in the extracellular medium.

Its subcellular location is the secreted. Functionally, participates in the reverse transport of cholesterol from tissues to the liver for excretion by promoting cholesterol efflux from tissues and by acting as a cofactor for the lecithin cholesterol acyltransferase (LCAT). As part of the SPAP complex, activates spermatozoa motility. In Ictidomys tridecemlineatus (Thirteen-lined ground squirrel), this protein is Apolipoprotein A-I (APOA1).